Reading from the N-terminus, the 68-residue chain is Large ribosomal subunit protein bL35 (68 aa).

The protein belongs to the bacterial ribosomal protein bL35 family.

The sequence is that of Large ribosomal subunit protein bL35 from Wolbachia pipientis wMel.